The sequence spans 386 residues: Putative 8-amino-7-oxononanoate synthase (386 aa).

R22 is a binding site for substrate. 109-110 is a binding site for pyridoxal 5'-phosphate; the sequence is GY. H134 contacts substrate. Pyridoxal 5'-phosphate is bound by residues S182, 207–210, and 238–241; these read DEAH and TLSK. An N6-(pyridoxal phosphate)lysine modification is found at K241. Residue T356 coordinates substrate.

The protein belongs to the class-II pyridoxal-phosphate-dependent aminotransferase family. BioF subfamily. In terms of assembly, homodimer. Pyridoxal 5'-phosphate is required as a cofactor.

It carries out the reaction 6-carboxyhexanoyl-[ACP] + L-alanine + H(+) = (8S)-8-amino-7-oxononanoate + holo-[ACP] + CO2. The protein operates within cofactor biosynthesis; biotin biosynthesis. In terms of biological role, catalyzes the decarboxylative condensation of pimeloyl-[acyl-carrier protein] and L-alanine to produce 8-amino-7-oxononanoate (AON), [acyl-carrier protein], and carbon dioxide. The protein is Putative 8-amino-7-oxononanoate synthase (bioF) of Nostoc sp. (strain PCC 7120 / SAG 25.82 / UTEX 2576).